The following is a 207-amino-acid chain: Imidazoleglycerol-phosphate dehydratase (207 aa).

This sequence belongs to the imidazoleglycerol-phosphate dehydratase family.

It localises to the cytoplasm. It carries out the reaction D-erythro-1-(imidazol-4-yl)glycerol 3-phosphate = 3-(imidazol-4-yl)-2-oxopropyl phosphate + H2O. It functions in the pathway amino-acid biosynthesis; L-histidine biosynthesis; L-histidine from 5-phospho-alpha-D-ribose 1-diphosphate: step 6/9. This is Imidazoleglycerol-phosphate dehydratase (hisB) from Azospirillum brasilense.